A 304-amino-acid chain; its full sequence is Opsin-1 (304 aa).

The Extracellular portion of the chain corresponds to 1 to 45; that stretch reads MIHPEQVADMLRPTTSTTSSHVPGPVPTVVPTPTEYQTLGETGHR. A helical membrane pass occupies residues 46–66; sequence TLWVTFALMVLSSGIFALLSW. The helical transmembrane segment at 74–94 threads the bilayer; that stretch reads LFHVITTLITVVASLSYFAMA. A helical transmembrane segment spans residues 129-149; the sequence is YVDWALTTPLLLLELCLLAGV. Residues 154-174 form a helical membrane-spanning segment; it reads TLMAIVADVIMVLCGLFAALG. The chain crosses the membrane as a helical span at residues 183 to 203; sequence WGWYTIGCFSYLFVIWHVALH. Residues 219–239 form a helical membrane-spanning segment; it reads FTGLAVFALLLWTAYPIIWGI. A helical transmembrane segment spans residues 252 to 272; that stretch reads ILIYTVLDLLAKPVFGFWLLL. Lys-263 bears the N6-(retinylidene)lysine mark. Residues 273-304 are Cytoplasmic-facing; sequence SHRAMPETNIDLPGYWSHGLATEGRIRIGEED.

Belongs to the archaeal/bacterial/fungal opsin family. Binds all-trans retinal via a protonated Schiff base linkage.

It localises to the membrane. Its function is as follows. Could facilitate a sensory photoresponse. This Neurospora crassa (strain ATCC 24698 / 74-OR23-1A / CBS 708.71 / DSM 1257 / FGSC 987) protein is Opsin-1 (nop-1).